The primary structure comprises 205 residues: MKVVAFERSVQGTGASRRLRNSGKTPGIIYGGAAEPKMIELDHNALWHALKKEAFHSSILELEVAGKSEQALLRAFQMHPFKPLVLHVDFQRVSANDKIHVKVPLHFMNQETAPGVKLGHGIVNHILNDLEVSCLPADLPEFIEVDLAAVELNQTVHLSDIKLPKGVTVITHGDDNPAVASISQPAGAVSEAAEGGEAAGETPAA.

Residues 184-205 (QPAGAVSEAAEGGEAAGETPAA) are disordered. Positions 186–205 (AGAVSEAAEGGEAAGETPAA) are enriched in low complexity.

The protein belongs to the bacterial ribosomal protein bL25 family. CTC subfamily. In terms of assembly, part of the 50S ribosomal subunit; part of the 5S rRNA/L5/L18/L25 subcomplex. Contacts the 5S rRNA. Binds to the 5S rRNA independently of L5 and L18.

In terms of biological role, this is one of the proteins that binds to the 5S RNA in the ribosome where it forms part of the central protuberance. The protein is Large ribosomal subunit protein bL25 of Cupriavidus necator (strain ATCC 17699 / DSM 428 / KCTC 22496 / NCIMB 10442 / H16 / Stanier 337) (Ralstonia eutropha).